Consider the following 542-residue polypeptide: Mitochondrial distribution and morphology protein 34 (542 aa).

The SMP-LTD domain occupies 1 to 216 (MSFRFNKGAF…LPSVIFSMSQ (216 aa)). Disordered stretches follow at residues 27–58 (LNSK…TRGP) and 372–435 (SSGD…TTAV). The segment covering 31–48 (TQSSSQTAPANTTNSAAT) has biased composition (low complexity). Residues 49–58 (DEVKQETRGP) are compositionally biased toward basic and acidic residues. Residues 379 to 394 (IRRRKIKMGKKSKSKK) are compositionally biased toward basic residues. Over residues 403 to 414 (SSPTVVMPSSPS) the composition is skewed to low complexity.

Belongs to the MDM34 family. As to quaternary structure, component of the ER-mitochondria encounter structure (ERMES) or MDM complex, composed of MMM1, MDM10, MDM12 and MDM34.

It localises to the mitochondrion outer membrane. Component of the ERMES/MDM complex, which serves as a molecular tether to connect the endoplasmic reticulum (ER) and mitochondria. Components of this complex are involved in the control of mitochondrial shape and protein biogenesis, and function in nonvesicular lipid trafficking between the ER and mitochondria. MDM34 is required for the interaction of the ER-resident membrane protein MMM1 and the outer mitochondrial membrane-resident beta-barrel protein MDM10. The protein is Mitochondrial distribution and morphology protein 34 of Lachancea thermotolerans (strain ATCC 56472 / CBS 6340 / NRRL Y-8284) (Yeast).